Here is a 393-residue protein sequence, read N- to C-terminus: Probable acetyl-CoA acyltransferase (393 aa).

The active-site Acyl-thioester intermediate is C88. Active-site proton acceptor residues include H349 and C378.

Belongs to the thiolase-like superfamily. Thiolase family.

It is found in the cytoplasm. It catalyses the reaction 2 acetyl-CoA = acetoacetyl-CoA + CoA. In Staphylococcus aureus (strain MSSA476), this protein is Probable acetyl-CoA acyltransferase.